Consider the following 175-residue polypeptide: Alpha-crystallin B chain (175 aa).

At Met-1 the chain carries N-acetylmethionine. Phosphoserine is present on residues Ser-19, Ser-45, and Ser-59. The sHSP domain maps to Arg-56–Glu-164. Residue His-83 coordinates Zn(2+). Lys-92 carries the post-translational modification N6-acetyllysine. Zn(2+)-binding residues include His-104, Glu-106, His-111, and His-119. Positions Val-145–Lys-175 are disordered. Lys-166 carries the N6-acetyllysine modification. Thr-170 carries an O-linked (GlcNAc) threonine glycan.

The protein belongs to the small heat shock protein (HSP20) family. In terms of assembly, heteromer composed of three CRYAA and one CRYAB subunits. Aggregates with homologous proteins, including the small heat shock protein HSPB1, to form large heteromeric complexes. Inter-subunit bridging via zinc ions enhances stability, which is crucial as there is no protein turn over in the lens. Interacts with HSPBAP1 and TTN/titin. Interacts with TMEM109; in the cellular response to DNA damage. Interacts with DES; binds rapidly during early stages of DES filament assembly and a reduced binding seen in the later stages. Interacts with TMED10; the interaction mediates the translocation from the cytoplasm into the ERGIC (endoplasmic reticulum-Golgi intermediate compartment) and thereby secretion. Interacts with ATP6V1A and with MTOR, forming a ternary complex. In terms of tissue distribution, lens as well as other tissues.

Its subcellular location is the cytoplasm. It localises to the nucleus. The protein resides in the secreted. It is found in the lysosome. May contribute to the transparency and refractive index of the lens. Has chaperone-like activity, preventing aggregation of various proteins under a wide range of stress conditions. In lens epithelial cells, stabilizes the ATP6V1A protein, preventing its degradation by the proteasome. The protein is Alpha-crystallin B chain (CRYAB) of Mesocricetus auratus (Golden hamster).